Reading from the N-terminus, the 423-residue chain is Putative RING-H2 finger protein ATL49 (423 aa).

The chain crosses the membrane as a helical span at residues 43–63; the sequence is ILLIIIILSIIFFISGLLHIL. The segment at 126 to 168 adopts an RING-type; atypical zinc-finger fold; the sequence is CPVCLCEFETEDKLRLLPKCSHAFHVECIDTWLLSHSTCPLCR. 2 disordered regions span residues 213–236 and 377–399; these read NNDSESTRIRSGRKSCDPDGDMDG and HRIPPEESLKSENSESLETKTPS. Residues 379 to 389 show a composition bias toward basic and acidic residues; the sequence is IPPEESLKSEN.

The protein belongs to the RING-type zinc finger family. ATL subfamily.

It is found in the membrane. The enzyme catalyses S-ubiquitinyl-[E2 ubiquitin-conjugating enzyme]-L-cysteine + [acceptor protein]-L-lysine = [E2 ubiquitin-conjugating enzyme]-L-cysteine + N(6)-ubiquitinyl-[acceptor protein]-L-lysine.. It participates in protein modification; protein ubiquitination. Functionally, may be involved in female gametophyte development. This chain is Putative RING-H2 finger protein ATL49 (ATL49), found in Arabidopsis thaliana (Mouse-ear cress).